Here is a 414-residue protein sequence, read N- to C-terminus: Tyrosine--tRNA ligase (414 aa).

L-tyrosine is bound at residue Tyr40. A 'HIGH' region motif is present at residues 45–54 (ATAASLHVGH). 2 residues coordinate L-tyrosine: Tyr175 and Gln179. The 'KMSKS' region signature appears at 235-239 (KMGKS). Lys238 contributes to the ATP binding site. One can recognise an S4 RNA-binding domain in the interval 349–414 (LTVVQLLAQT…KKKHRMVQLG (66 aa)).

The protein belongs to the class-I aminoacyl-tRNA synthetase family. TyrS type 1 subfamily. In terms of assembly, homodimer.

The protein localises to the cytoplasm. The catalysed reaction is tRNA(Tyr) + L-tyrosine + ATP = L-tyrosyl-tRNA(Tyr) + AMP + diphosphate + H(+). Catalyzes the attachment of tyrosine to tRNA(Tyr) in a two-step reaction: tyrosine is first activated by ATP to form Tyr-AMP and then transferred to the acceptor end of tRNA(Tyr). The polypeptide is Tyrosine--tRNA ligase (Paracoccus denitrificans (strain Pd 1222)).